The sequence spans 447 residues: Phosphoglucosamine mutase (447 aa).

The Phosphoserine intermediate role is filled by Ser-104. The Mg(2+) site is built by Ser-104, Asp-243, Asp-245, and Asp-247. At Ser-104 the chain carries Phosphoserine.

Belongs to the phosphohexose mutase family. The cofactor is Mg(2+). Activated by phosphorylation.

It catalyses the reaction alpha-D-glucosamine 1-phosphate = D-glucosamine 6-phosphate. Functionally, catalyzes the conversion of glucosamine-6-phosphate to glucosamine-1-phosphate. The protein is Phosphoglucosamine mutase of Corynebacterium diphtheriae (strain ATCC 700971 / NCTC 13129 / Biotype gravis).